A 906-amino-acid polypeptide reads, in one-letter code: Kinesin-like protein KIN-7G (906 aa).

In terms of domain architecture, Kinesin motor spans 26–344 (SVAVAVRFRP…LKFAHRAKHI (319 aa)). 105–112 (GVTSSGKT) serves as a coordination point for ATP. Coiled-coil stretches lie at residues 346–385 (IQAT…RTGT), 733–814 (SDEF…GRNQ), and 839–875 (GDMN…LEKE). The tract at residues 803–840 (RLSSELASGRNQRRGSHGPRGARRESHTKRYEPARRGD) is disordered. Basic residues predominate over residues 813–823 (NQRRGSHGPRG). The span at 824-840 (ARRESHTKRYEPARRGD) shows a compositional bias: basic and acidic residues.

This sequence belongs to the TRAFAC class myosin-kinesin ATPase superfamily. Kinesin family. KIN-7 subfamily.

This chain is Kinesin-like protein KIN-7G, found in Oryza sativa subsp. japonica (Rice).